We begin with the raw amino-acid sequence, 254 residues long: Triosephosphate isomerase (254 aa).

Residue 9-11 (NWK) coordinates substrate. Catalysis depends on histidine 96, which acts as the Electrophile. The active-site Proton acceptor is glutamate 168. Substrate contacts are provided by glycine 174 and serine 213.

This sequence belongs to the triosephosphate isomerase family. As to quaternary structure, homodimer.

Its subcellular location is the cytoplasm. The enzyme catalyses D-glyceraldehyde 3-phosphate = dihydroxyacetone phosphate. It functions in the pathway carbohydrate biosynthesis; gluconeogenesis. The protein operates within carbohydrate degradation; glycolysis; D-glyceraldehyde 3-phosphate from glycerone phosphate: step 1/1. Its function is as follows. Involved in the gluconeogenesis. Catalyzes stereospecifically the conversion of dihydroxyacetone phosphate (DHAP) to D-glyceraldehyde-3-phosphate (G3P). The chain is Triosephosphate isomerase from Buchnera aphidicola subsp. Schizaphis graminum (strain Sg).